We begin with the raw amino-acid sequence, 645 residues long: Chaperone protein DnaK (645 aa).

A Phosphothreonine; by autocatalysis modification is found at threonine 201. A compositionally biased stretch (low complexity) spans 606–629; sequence NTNNATAGDNNTTDTGSSSNSDGS. The segment at 606–645 is disordered; that stretch reads NTNNATAGDNNTTDTGSSSNSDGSKVVDSDYQEIDKKDGK. A compositionally biased stretch (basic and acidic residues) spans 630-645; that stretch reads KVVDSDYQEIDKKDGK.

It belongs to the heat shock protein 70 family.

In terms of biological role, acts as a chaperone. This chain is Chaperone protein DnaK, found in Ehrlichia ruminantium (strain Gardel).